Here is a 356-residue protein sequence, read N- to C-terminus: Glutamine synthetase PR-2 (356 aa).

A GS beta-grasp domain is found at 19–99 (IIAEYIWVGG…VICDVYTPAG (81 aa)). A disordered region spans residues 37–66 (ARTLPGPVDDPAKLPKWNYDGSSTDQAPGD). The GS catalytic domain maps to 106-356 (KRYDAAKIFS…IAETTILWKP (251 aa)).

Belongs to the glutamine synthetase family. As to quaternary structure, homooctamer. In terms of tissue distribution, roots.

It is found in the cytoplasm. It carries out the reaction L-glutamate + NH4(+) + ATP = L-glutamine + ADP + phosphate + H(+). The sequence is that of Glutamine synthetase PR-2 from Phaseolus vulgaris (Kidney bean).